Consider the following 189-residue polypeptide: Interferon alpha-A (189 aa).

The N-terminal stretch at 1–23 is a signal peptide; it reads MAPAWSFLLSLLLLSCNAICSLG. 2 cysteine pairs are disulfide-bonded: cysteine 24-cysteine 122 and cysteine 52-cysteine 162.

It belongs to the alpha/beta interferon family.

It is found in the secreted. Produced by macrophages, IFN-alpha have antiviral activities. Interferon stimulates the production of two enzymes: a protein kinase and an oligoadenylate synthetase. In Bos taurus (Bovine), this protein is Interferon alpha-A (IFNAA).